A 353-amino-acid polypeptide reads, in one-letter code: Photosystem II protein D1 (353 aa).

T2 is modified (N-acetylthreonine). Residue T2 is modified to Phosphothreonine. 3 consecutive transmembrane segments (helical) span residues Y29 to S46, H118 to L133, and W142 to A156. H118 provides a ligand contact to chlorophyll a. Residue Y126 coordinates pheophytin a. [CaMn4O5] cluster is bound by residues D170 and E189. Residues F197–L218 traverse the membrane as a helical segment. H198 lines the chlorophyll a pocket. Residues H215 and S264–F265 contribute to the a quinone site. Fe cation is bound at residue H215. Residue H272 participates in Fe cation binding. A helical membrane pass occupies residues F274–L288. Residues H332, E333, D342, and A344 each coordinate [CaMn4O5] cluster. The propeptide occupies A345 to G353.

The protein belongs to the reaction center PufL/M/PsbA/D family. PSII is composed of 1 copy each of membrane proteins PsbA, PsbB, PsbC, PsbD, PsbE, PsbF, PsbH, PsbI, PsbJ, PsbK, PsbL, PsbM, PsbT, PsbX, PsbY, PsbZ, Psb30/Ycf12, at least 3 peripheral proteins of the oxygen-evolving complex and a large number of cofactors. It forms dimeric complexes. Requires The D1/D2 heterodimer binds P680, chlorophylls that are the primary electron donor of PSII, and subsequent electron acceptors. It shares a non-heme iron and each subunit binds pheophytin, quinone, additional chlorophylls, carotenoids and lipids. D1 provides most of the ligands for the Mn4-Ca-O5 cluster of the oxygen-evolving complex (OEC). There is also a Cl(-1) ion associated with D1 and D2, which is required for oxygen evolution. The PSII complex binds additional chlorophylls, carotenoids and specific lipids. as cofactor. In terms of processing, tyr-161 forms a radical intermediate that is referred to as redox-active TyrZ, YZ or Y-Z. C-terminally processed by CTPA; processing is essential to allow assembly of the oxygen-evolving complex and thus photosynthetic growth.

Its subcellular location is the plastid. The protein localises to the chloroplast thylakoid membrane. The catalysed reaction is 2 a plastoquinone + 4 hnu + 2 H2O = 2 a plastoquinol + O2. Its function is as follows. Photosystem II (PSII) is a light-driven water:plastoquinone oxidoreductase that uses light energy to abstract electrons from H(2)O, generating O(2) and a proton gradient subsequently used for ATP formation. It consists of a core antenna complex that captures photons, and an electron transfer chain that converts photonic excitation into a charge separation. The D1/D2 (PsbA/PsbD) reaction center heterodimer binds P680, the primary electron donor of PSII as well as several subsequent electron acceptors. The chain is Photosystem II protein D1 from Medicago sativa (Alfalfa).